We begin with the raw amino-acid sequence, 785 residues long: Endonuclease MutS2 (785 aa).

335–342 (GPNTGGKT) contributes to the ATP binding site. The Smr domain maps to 710–785 (LDLRGERYED…GNGVTIVEFK (76 aa)).

Belongs to the DNA mismatch repair MutS family. MutS2 subfamily. In terms of assembly, homodimer. Binds to stalled ribosomes, contacting rRNA.

Endonuclease that is involved in the suppression of homologous recombination and thus may have a key role in the control of bacterial genetic diversity. In terms of biological role, acts as a ribosome collision sensor, splitting the ribosome into its 2 subunits. Detects stalled/collided 70S ribosomes which it binds and splits by an ATP-hydrolysis driven conformational change. Acts upstream of the ribosome quality control system (RQC), a ribosome-associated complex that mediates the extraction of incompletely synthesized nascent chains from stalled ribosomes and their subsequent degradation. Probably generates substrates for RQC. The protein is Endonuclease MutS2 of Listeria innocua serovar 6a (strain ATCC BAA-680 / CLIP 11262).